We begin with the raw amino-acid sequence, 77 residues long: Acyl carrier protein (77 aa).

One can recognise a Carrier domain in the interval 2-77 (ADALERVTKI…DAVNYINSKQ (76 aa)). Residue S37 is modified to O-(pantetheine 4'-phosphoryl)serine.

It belongs to the acyl carrier protein (ACP) family. Post-translationally, 4'-phosphopantetheine is transferred from CoA to a specific serine of apo-ACP by AcpS. This modification is essential for activity because fatty acids are bound in thioester linkage to the sulfhydryl of the prosthetic group.

Its subcellular location is the cytoplasm. The protein operates within lipid metabolism; fatty acid biosynthesis. Functionally, carrier of the growing fatty acid chain in fatty acid biosynthesis. The protein is Acyl carrier protein of Bacillus licheniformis (strain ATCC 14580 / DSM 13 / JCM 2505 / CCUG 7422 / NBRC 12200 / NCIMB 9375 / NCTC 10341 / NRRL NRS-1264 / Gibson 46).